The sequence spans 418 residues: Probable cysteine desulfurase (418 aa).

K236 is modified (N6-(pyridoxal phosphate)lysine). C376 functions as the Cysteine persulfide intermediate in the catalytic mechanism.

The protein belongs to the class-V pyridoxal-phosphate-dependent aminotransferase family. Csd subfamily. The cofactor is pyridoxal 5'-phosphate.

The catalysed reaction is (sulfur carrier)-H + L-cysteine = (sulfur carrier)-SH + L-alanine. Functionally, catalyzes the removal of elemental sulfur and selenium atoms from L-cysteine, L-cystine, L-selenocysteine, and L-selenocystine to produce L-alanine. The chain is Probable cysteine desulfurase (csd) from Streptomyces coelicolor (strain ATCC BAA-471 / A3(2) / M145).